The following is a 96-amino-acid chain: MQLYTYLYLLVPLVTFHLILGTGTLDHGDALTERRSTDATALKPEPVLLQKSSARSTNDNGKDTQMKRILKKRGNKARGEEELAEKAPEFARELAN.

The N-terminal stretch at 1-21 (MQLYTYLYLLVPLVTFHLILG) is a signal peptide. The propeptide occupies 22–78 (TGTLDHGDALTERRSTDATALKPEPVLLQKSSARSTNDNGKDTQMKRILKKRGNKAR). The tract at residues 51-96 (KSSARSTNDNGKDTQMKRILKKRGNKARGEEELAEKAPEFARELAN) is disordered. Residues 77-96 (ARGEEELAEKAPEFARELAN) show a composition bias toward basic and acidic residues. Residue E81 coordinates a divalent metal cation. 4-carboxyglutamate is present on residues E81, E82, and E85. Residue E85 coordinates a divalent metal cation. A 4-hydroxyproline modification is found at P88. 2 residues coordinate a divalent metal cation: E89 and E93. E89 and E93 each carry 4-carboxyglutamate. Asparagine amide is present on N96.

Belongs to the conotoxin B superfamily. It depends on Ca(2+) as a cofactor. Mg(2+) serves as cofactor. Hydroxylation of Pro-88 is important for NR2B/GRIN2B NMDA receptor selectivity. Removal of hydroxylation does not change global NMDA receptor antagonism (tested on WT neurons), but it decreases the inhibitory potency on NR2B/GRIN2B NMDA receptors and increases the inhibitory potency on NR2A/GRIN2A NMDA receptors. Hydroxylation of Pro-88 locally disrupts a small region of the divalent cation-induced alpha-helix but does not destabilize the entire helix. Expressed by the venom duct.

It localises to the secreted. Functionally, conantokins inhibit N-methyl-D-aspartate (NMDA) receptors. This toxin has antagonist activity on the NR2B/GRIN2B subunit (IC(50)=0.1 uM). In vivo, when delivered into the brain, is active has anticonvulsant activity in the model of epilepsy in mice. This is Conantokin Rl-B from Conus rolani (Cone snail).